A 211-amino-acid chain; its full sequence is Arginine exporter protein ArgO (211 aa).

The Cytoplasmic segment spans residues 1-38 (MFSYYFQGLALGAAMILPLGPQNAFVMNQGIRRQYHIM). The helical transmembrane segment at 39–58 (IALLCAISDLVLICAGIFGG) threads the bilayer. Topologically, residues 59 to 63 (SALLM) are periplasmic. Residues 64-91 (QSPWLLALVTWGGVAFLLWYGFGAFKTA) traverse the membrane as a helical segment. The Cytoplasmic portion of the chain corresponds to 92 to 102 (MSSNIELASAE). The chain crosses the membrane as a helical span at residues 103 to 130 (VMKQGRWKIIATMLAVTWLNPHVYLDTF). The Periplasmic segment spans residues 131–140 (VVLGSLGGQL). Residues 141–170 (DVEPKRWFALGTISASFLWFFGLALLAAWL) form a helical membrane-spanning segment. At 171 to 173 (APR) the chain is on the cytoplasmic side. Residues 174–200 (LRTAKAQRIINLVVGCVMWFIALQLAR) traverse the membrane as a helical segment. The Periplasmic portion of the chain corresponds to 201–211 (DGIAHAQALFS).

This sequence belongs to the LysE/ArgO transporter (TC 2.A.75) family. As to quaternary structure, monomer.

Its subcellular location is the cell inner membrane. It carries out the reaction L-arginine(in) = L-arginine(out). Functionally, involved in the export of arginine. Important to control the intracellular level of arginine and the correct balance between arginine and lysine. May also be involved in the export of canavanine (a plant-derived antimetabolite). This is Arginine exporter protein ArgO from Escherichia coli (strain K12).